Reading from the N-terminus, the 379-residue chain is 8-amino-7-oxononanoate synthase (379 aa).

Substrate is bound by residues Arg-27 and Arg-34. 114–115 (GY) contacts pyridoxal 5'-phosphate. Residue His-139 coordinates substrate. Pyridoxal 5'-phosphate contacts are provided by residues Ser-187, 212–215 (DDAH), and 232–235 (TLSK). At Lys-235 the chain carries N6-(pyridoxal phosphate)lysine. Residue Thr-344 participates in substrate binding.

It belongs to the class-II pyridoxal-phosphate-dependent aminotransferase family. BioF subfamily. Homodimer. The cofactor is pyridoxal 5'-phosphate.

It carries out the reaction 6-carboxyhexanoyl-[ACP] + L-alanine + H(+) = (8S)-8-amino-7-oxononanoate + holo-[ACP] + CO2. The protein operates within cofactor biosynthesis; biotin biosynthesis. In terms of biological role, catalyzes the decarboxylative condensation of pimeloyl-[acyl-carrier protein] and L-alanine to produce 8-amino-7-oxononanoate (AON), [acyl-carrier protein], and carbon dioxide. In Methylobacterium sp. (strain 4-46), this protein is 8-amino-7-oxononanoate synthase.